The sequence spans 295 residues: uncharacterized protein (295 aa).

The signal sequence occupies residues 1–19; it reads MFKKYIFILILFIASIARA. The interval 275–295 is disordered; it reads RNNPPLKNNNAKGKNPYDTNK. Over residues 276–295 the composition is skewed to low complexity; it reads NNPPLKNNNAKGKNPYDTNK.

This is an uncharacterized protein from Rickettsia conorii (strain ATCC VR-613 / Malish 7).